The following is a 545-amino-acid chain: Chaperonin GroEL 1 (545 aa).

Residues Thr30 to Pro33, Lys51, Asp87 to Thr91, Gly415, and Asp496 each bind ATP.

The protein belongs to the chaperonin (HSP60) family. Forms a cylinder of 14 subunits composed of two heptameric rings stacked back-to-back. Interacts with the co-chaperonin GroES.

The protein resides in the cytoplasm. It carries out the reaction ATP + H2O + a folded polypeptide = ADP + phosphate + an unfolded polypeptide.. Together with its co-chaperonin GroES, plays an essential role in assisting protein folding. The GroEL-GroES system forms a nano-cage that allows encapsulation of the non-native substrate proteins and provides a physical environment optimized to promote and accelerate protein folding. This chain is Chaperonin GroEL 1, found in Nitrobacter hamburgensis (strain DSM 10229 / NCIMB 13809 / X14).